Consider the following 37-residue polypeptide: Large ribosomal subunit protein bL36 (37 aa).

Belongs to the bacterial ribosomal protein bL36 family.

The chain is Large ribosomal subunit protein bL36 from Halalkalibacterium halodurans (strain ATCC BAA-125 / DSM 18197 / FERM 7344 / JCM 9153 / C-125) (Bacillus halodurans).